Here is a 297-residue protein sequence, read N- to C-terminus: Putative S-adenosyl-L-methionine-dependent methyltransferase Mmcs_1044 (297 aa).

S-adenosyl-L-methionine contacts are provided by residues aspartate 124 and 153 to 154 (DL).

This sequence belongs to the UPF0677 family.

Functionally, exhibits S-adenosyl-L-methionine-dependent methyltransferase activity. The sequence is that of Putative S-adenosyl-L-methionine-dependent methyltransferase Mmcs_1044 from Mycobacterium sp. (strain MCS).